The sequence spans 61 residues: Insect toxin BsIT3 (61 aa).

The region spanning 1-61 (DGYILNSKGC…RWTSSKNKCN (61 aa)) is the LCN-type CS-alpha/beta domain. 4 disulfide bridges follow: Cys10–Cys60, Cys14–Cys35, Cys21–Cys42, and Cys25–Cys44.

The protein belongs to the long (4 C-C) scorpion toxin superfamily. Sodium channel inhibitor family. Beta subfamily. As to expression, expressed by the venom gland.

The protein resides in the secreted. Functionally, depressant insect beta-toxins cause a transient contraction paralysis followed by a slow flaccid paralysis. They bind voltage-independently at site-4 of sodium channels (Nav) and shift the voltage of activation toward more negative potentials thereby affecting sodium channel activation and promoting spontaneous and repetitive firing. This toxin is active only on insects. This chain is Insect toxin BsIT3, found in Hottentotta tamulus sindicus (Scorpion).